The following is a 159-amino-acid chain: Short coiled-coil protein (159 aa).

The stretch at 78–146 (MMNADMDAVD…QYIENLMSAS (69 aa)) forms a coiled coil.

It belongs to the SCOC family. Homodimer. Interacts with ARL1, ARL2 and ARL3. Directly interacts with FEZ1 and UVRAG. The interaction with UVRAG is reduced by amino acid starvation, but the complex is stabilized in the presence of FEZ1. Interacts with NRBF2. As to expression, widely expressed with highest levels in brain, heart and skeletal muscle.

It localises to the golgi apparatus membrane. The protein localises to the golgi apparatus. It is found in the trans-Golgi network. The protein resides in the cytoplasm. Its subcellular location is the cytosol. Its function is as follows. Positive regulator of amino acid starvation-induced autophagy. The chain is Short coiled-coil protein (SCOC) from Homo sapiens (Human).